The chain runs to 329 residues: Ketol-acid reductoisomerase (NADP(+)) (329 aa).

The KARI N-terminal Rossmann domain occupies 1-181 (MKVYYEQDAN…GGTRSGVIET (181 aa)). Residues 24–27 (YGSQ), Arg47, and 82–85 (DQYQ) each bind NADP(+). His107 is an active-site residue. Gly133 is an NADP(+) binding site. The 146-residue stretch at 182 to 327 (TFREETETDL…ARLRSMMPWL (146 aa)) folds into the KARI C-terminal knotted domain. Mg(2+) is bound by residues Asp190, Glu194, Glu226, and Glu230. Ser251 serves as a coordination point for substrate.

Belongs to the ketol-acid reductoisomerase family. It depends on Mg(2+) as a cofactor.

It carries out the reaction (2R)-2,3-dihydroxy-3-methylbutanoate + NADP(+) = (2S)-2-acetolactate + NADPH + H(+). It catalyses the reaction (2R,3R)-2,3-dihydroxy-3-methylpentanoate + NADP(+) = (S)-2-ethyl-2-hydroxy-3-oxobutanoate + NADPH + H(+). It functions in the pathway amino-acid biosynthesis; L-isoleucine biosynthesis; L-isoleucine from 2-oxobutanoate: step 2/4. It participates in amino-acid biosynthesis; L-valine biosynthesis; L-valine from pyruvate: step 2/4. Involved in the biosynthesis of branched-chain amino acids (BCAA). Catalyzes an alkyl-migration followed by a ketol-acid reduction of (S)-2-acetolactate (S2AL) to yield (R)-2,3-dihydroxy-isovalerate. In the isomerase reaction, S2AL is rearranged via a Mg-dependent methyl migration to produce 3-hydroxy-3-methyl-2-ketobutyrate (HMKB). In the reductase reaction, this 2-ketoacid undergoes a metal-dependent reduction by NADPH to yield (R)-2,3-dihydroxy-isovalerate. In Oleidesulfovibrio alaskensis (strain ATCC BAA-1058 / DSM 17464 / G20) (Desulfovibrio alaskensis), this protein is Ketol-acid reductoisomerase (NADP(+)).